The sequence spans 475 residues: Mitochondrial adenyl nucleotide antiporter SLC25A24 (475 aa).

Residues 1–173 (MLRWLRAFVL…RFWKHSTGID (173 aa)) form a regulatory N-terminal domain region. The Mitochondrial intermembrane segment spans residues 1-197 (MLRWLRAFVL…EKKSGQWWRQ (197 aa)). 4 EF-hand domains span residues 19-54 (EPPT…LGIP), 55-88 (LGQD…KDHE), 86-121 (DHEK…LGLH), and 122-157 (ISEK…NPVT). 20 residues coordinate Ca(2+): D32, N34, D36, V38, E43, D68, N70, D72, K74, E79, D99, N101, D103, K105, E110, D135, D137, T139, T141, and E146. The interval 159-168 (IEEIIRFWKH) is linker region. The tract at residues 174 to 475 (IGDSLTIPDE…MKQTLGVAQK (302 aa)) is C-terminal transmembrane transporter domain. Solcar repeat units lie at residues 192–276 (GQWW…YKKL), 284–369 (LGTF…LKSY), and 381–469 (PGVM…MKQT). Residues 198–215 (LLAGGVAGAVSRTSTAPL) form a helical membrane-spanning segment. Over 216–250 (DRLKVMMQVHGSKSMNIFGGFRQMVKEGGIRSLWR) the chain is Mitochondrial matrix. Residues 251–270 (GNGTNVIKIAPETAVKFWAY) traverse the membrane as a helical segment. Over 271–293 (EQYKKLLTEEGQKLGTFERFISG) the chain is Mitochondrial intermembrane. Residues 294-307 (SMAGATAQTFIYPM) form a helical membrane-spanning segment. Residues 308-343 (EVLKTRLAVAKTGQYSGIYGCAKKILKHEGFGAFYK) lie on the Mitochondrial matrix side of the membrane. An N6-acetyllysine; alternate modification is found at K318. K318 carries the N6-succinyllysine; alternate modification. K334 carries the post-translational modification N6-acetyllysine. Residues 344-363 (GYIPNLLGIIPYAGIDLAVY) form a helical membrane-spanning segment. Residues 364-386 (ELLKSYWLDNFAKDSVNPGVMVL) are Mitochondrial intermembrane-facing. A helical membrane pass occupies residues 387 to 404 (LSCGALSSTCGQLASYPL). The Mitochondrial matrix segment spans residues 405-443 (ALVRTRMQAQATVEGAPQLSMVGLFQRIVSKEGVSGLYR). K435 carries the N6-acetyllysine; alternate modification. At K435 the chain carries N6-succinyllysine; alternate. A helical transmembrane segment spans residues 444 to 463 (GITPNFMKVLPAVGISYVVY). Residues 464-475 (ENMKQTLGVAQK) lie on the Mitochondrial intermembrane side of the membrane.

The protein belongs to the mitochondrial carrier (TC 2.A.29) family. As to quaternary structure, monomer.

It localises to the mitochondrion inner membrane. It catalyses the reaction Mg(2+)(out) + phosphate(in) + ATP(out) = Mg(2+)(in) + phosphate(out) + ATP(in). The enzyme catalyses ADP(out) + phosphate(in) + H(+)(out) = ADP(in) + phosphate(out) + H(+)(in). It carries out the reaction AMP(out) + phosphate(in) = AMP(in) + phosphate(out). The catalysed reaction is phosphate(in) + ATP(out) + 2 H(+)(out) = phosphate(out) + ATP(in) + 2 H(+)(in). It catalyses the reaction dADP(in) + ADP(out) = dADP(out) + ADP(in). The enzyme catalyses Mg(2+)(in) + ADP(out) + ATP(in) + H(+)(out) = Mg(2+)(out) + ADP(in) + ATP(out) + H(+)(in). It carries out the reaction ADP(out) + diphosphate(in) = ADP(in) + diphosphate(out). The catalysed reaction is dAMP(in) + ADP(out) + H(+)(out) = dAMP(out) + ADP(in) + H(+)(in). It catalyses the reaction 3'-AMP(in) + ADP(out) + H(+)(out) = 3'-AMP(out) + ADP(in) + H(+)(in). The enzyme catalyses dAMP(out) + phosphate(in) = dAMP(in) + phosphate(out). It carries out the reaction 3'-AMP(out) + phosphate(in) = 3'-AMP(in) + phosphate(out). The catalysed reaction is dADP(out) + phosphate(in) + H(+)(out) = dADP(in) + phosphate(out) + H(+)(in). Its activity is regulated as follows. Activated by an increase in cytosolic calcium levels that induce a conformational change of the N-terminal regulatory domain, uncapping the channel and allowing transport. Inhibited by bathophenanthroline, mersalyl, p-hydroxymercuribenzoate, bromcresol purple and tannic acid. Its function is as follows. Electroneutral antiporter that mediates the transport of adenyl nucleotides through the inner mitochondrial membrane. Originally identified as an ATP-magnesium/inorganic phosphate antiporter, it also acts as a broad specificity adenyl nucleotide antiporter. By regulating the mitochondrial matrix adenyl nucleotide pool could adapt to changing cellular energetic demands and indirectly regulate adenyl nucleotide-dependent metabolic pathways. In vitro, a low activity is also observed with guanyl and pyrimidine nucleotides. May play a role in protecting cells against oxidative stress-induced cell death, by buffering calcium levels in the mitochondrial matrix through the formation of calcium-phosphate precipitates. This chain is Mitochondrial adenyl nucleotide antiporter SLC25A24, found in Mus musculus (Mouse).